The chain runs to 96 residues: Citrate lyase acyl carrier protein (96 aa).

At S14 the chain carries O-(phosphoribosyl dephospho-coenzyme A)serine.

It belongs to the CitD family. In terms of assembly, oligomer with a subunit composition of (alpha,beta,gamma)6.

The protein localises to the cytoplasm. Covalent carrier of the coenzyme of citrate lyase. The chain is Citrate lyase acyl carrier protein from Pectobacterium atrosepticum (strain SCRI 1043 / ATCC BAA-672) (Erwinia carotovora subsp. atroseptica).